We begin with the raw amino-acid sequence, 267 residues long: L-aspartate dehydrogenase (267 aa).

Residues A124 and N190 each coordinate NAD(+). The active site involves H220.

The protein belongs to the L-aspartate dehydrogenase family.

It carries out the reaction L-aspartate + NADP(+) + H2O = oxaloacetate + NH4(+) + NADPH + H(+). It catalyses the reaction L-aspartate + NAD(+) + H2O = oxaloacetate + NH4(+) + NADH + H(+). It participates in cofactor biosynthesis; NAD(+) biosynthesis; iminoaspartate from L-aspartate (dehydrogenase route): step 1/1. In terms of biological role, specifically catalyzes the NAD or NADP-dependent dehydrogenation of L-aspartate to iminoaspartate. This is L-aspartate dehydrogenase from Pseudomonas aeruginosa (strain ATCC 15692 / DSM 22644 / CIP 104116 / JCM 14847 / LMG 12228 / 1C / PRS 101 / PAO1).